The primary structure comprises 71 residues: ATP synthase F(0) complex subunit e, mitochondrial (71 aa).

The residue at position 34 (Lys-34) is an N6-acetyllysine.

The protein belongs to the ATPase e subunit family. Component of the ATP synthase complex composed at least of ATP5F1A/subunit alpha, ATP5F1B/subunit beta, ATP5MC1/subunit c (homooctomer), MT-ATP6/subunit a, MT-ATP8/subunit 8, ATP5ME/subunit e, ATP5MF/subunit f, ATP5MG/subunit g, ATP5MK/subunit k, ATP5MJ/subunit j, ATP5F1C/subunit gamma, ATP5F1D/subunit delta, ATP5F1E/subunit epsilon, ATP5PF/subunit F6, ATP5PB/subunit b, ATP5PD/subunit d, ATP5PO/subunit OSCP. ATP synthase complex consists of a soluble F(1) head domain (subunits alpha(3) and beta(3)) - the catalytic core - and a membrane F(0) domain - the membrane proton channel (subunits c, a, 8, e, f, g, k and j). These two domains are linked by a central stalk (subunits gamma, delta, and epsilon) rotating inside the F1 region and a stationary peripheral stalk (subunits F6, b, d, and OSCP).

Its subcellular location is the mitochondrion. The protein localises to the mitochondrion inner membrane. In terms of biological role, subunit e, of the mitochondrial membrane ATP synthase complex (F(1)F(0) ATP synthase or Complex V) that produces ATP from ADP in the presence of a proton gradient across the membrane which is generated by electron transport complexes of the respiratory chain. ATP synthase complex consist of a soluble F(1) head domain - the catalytic core - and a membrane F(1) domain - the membrane proton channel. These two domains are linked by a central stalk rotating inside the F(1) region and a stationary peripheral stalk. During catalysis, ATP synthesis in the catalytic domain of F(1) is coupled via a rotary mechanism of the central stalk subunits to proton translocation. In vivo, can only synthesize ATP although its ATP hydrolase activity can be activated artificially in vitro. Part of the complex F(0) domain. The sequence is that of ATP synthase F(0) complex subunit e, mitochondrial from Bos taurus (Bovine).